A 195-amino-acid chain; its full sequence is Large ribosomal subunit protein uL5 (195 aa).

The protein belongs to the universal ribosomal protein uL5 family. Part of the 50S ribosomal subunit; part of the 5S rRNA/L5/L18/L25 subcomplex. Contacts the 5S rRNA and the P site tRNA. Forms a bridge to the 30S subunit in the 70S ribosome.

This is one of the proteins that bind and probably mediate the attachment of the 5S RNA into the large ribosomal subunit, where it forms part of the central protuberance. In the 70S ribosome it contacts protein S13 of the 30S subunit (bridge B1b), connecting the 2 subunits; this bridge is implicated in subunit movement. Contacts the P site tRNA; the 5S rRNA and some of its associated proteins might help stabilize positioning of ribosome-bound tRNAs. In Chlorobium chlorochromatii (strain CaD3), this protein is Large ribosomal subunit protein uL5.